The primary structure comprises 430 residues: Shufflon protein A' (430 aa).

Positions 1 to 361 (MKKYDRGWAS…TGAILSCQSG (361 aa)) are constant region. The interval 362–430 (TWGTIGGKLK…GCIASCVTLN (69 aa)) is variable region.

The chain is Shufflon protein A' from Escherichia coli.